Consider the following 145-residue polypeptide: Plastocyanin, chloroplastic (145 aa).

The N-terminal 48 residues, 1–48, are a transit peptide targeting the chloroplast; sequence MASLMRKAAVAPAKATRTTVKASASLQRVAQAAGVAVAGFSLALSANA. The region spanning 49–145 is the Plastocyanin-like domain; the sequence is ANVKLGADSG…AGMVGKVIVQ (97 aa). Residues histidine 85, cysteine 130, histidine 133, and methionine 138 each coordinate Cu cation.

Belongs to the plastocyanin family. Cu(2+) is required as a cofactor.

Its subcellular location is the plastid. The protein localises to the chloroplast thylakoid membrane. In terms of biological role, participates in electron transfer between P700 and the cytochrome b6-f complex in photosystem I. In Tetradesmus obliquus (Green alga), this protein is Plastocyanin, chloroplastic (PETE).